Here is a 255-residue protein sequence, read N- to C-terminus: Small ribosomal subunit protein eS1 (255 aa).

Ala2 is modified (N-acetylalanine; partial).

The protein belongs to the eukaryotic ribosomal protein eS1 family. As to quaternary structure, component of the small ribosomal subunit. Mature ribosomes consist of a small (40S) and a large (60S) subunit. The 40S subunit contains about 33 different proteins and 1 molecule of RNA (18S). The 60S subunit contains about 49 different proteins and 3 molecules of RNA (25S, 5.8S and 5S).

The protein localises to the cytoplasm. The polypeptide is Small ribosomal subunit protein eS1 (Arthroderma otae (strain ATCC MYA-4605 / CBS 113480) (Microsporum canis)).